The following is a 745-amino-acid chain: Elongation factor G, mitochondrial (745 aa).

Positions 40 to 317 constitute a tr-type G domain; it reads EKIRNIGISA…AVLDYLPNPG (278 aa). Residues 49–56, 116–120, and 170–173 contribute to the GTP site; these read AHIDSGKT, DTPGH, and NKLD.

It belongs to the TRAFAC class translation factor GTPase superfamily. Classic translation factor GTPase family. EF-G/EF-2 subfamily.

It localises to the mitochondrion. It functions in the pathway protein biosynthesis; polypeptide chain elongation. Its function is as follows. Mitochondrial GTPase that catalyzes the GTP-dependent ribosomal translocation step during translation elongation. During this step, the ribosome changes from the pre-translocational (PRE) to the post-translocational (POST) state as the newly formed A-site-bound peptidyl-tRNA and P-site-bound deacylated tRNA move to the P and E sites, respectively. Catalyzes the coordinated movement of the two tRNA molecules, the mRNA and conformational changes in the ribosome. Essential during development as it acts as a retrograde signal from mitochondria to the nucleus to slow down cell proliferation if mitochondrial energy output is low. The protein is Elongation factor G, mitochondrial of Drosophila willistoni (Fruit fly).